A 433-amino-acid polypeptide reads, in one-letter code: Phosphoglycerate kinase, chloroplastic (433 aa).

The transit peptide at 1-28 (GASFSLHVLSKINSYKSQSTKPIRGVAS) directs the protein to the chloroplast. 11 residues coordinate (2R)-3-phosphoglycerate: A51, D52, N54, R68, S90, H91, G93, R94, R149, H181, and R182. G227 provides a ligand contact to ADP. A CDP-binding site is contributed by G227. Positions 229 and 233 each coordinate AMP. K233 contacts ATP. G251 provides a ligand contact to ADP. Residue G251 participates in CDP binding. AMP contacts are provided by G252 and G324. Positions 252 and 324 each coordinate ATP. CDP-binding residues include G349 and F354. F354 provides a ligand contact to ADP. Position 355 (E355) interacts with AMP. 3 residues coordinate ATP: E355, D386, and S387. D386 contacts Mg(2+).

It belongs to the phosphoglycerate kinase family. Monomer. The cofactor is Mg(2+).

Its subcellular location is the plastid. The protein localises to the chloroplast. The enzyme catalyses (2R)-3-phosphoglycerate + ATP = (2R)-3-phospho-glyceroyl phosphate + ADP. Its pathway is carbohydrate biosynthesis; Calvin cycle. This Spinacia oleracea (Spinach) protein is Phosphoglycerate kinase, chloroplastic.